We begin with the raw amino-acid sequence, 312 residues long: Malate dehydrogenase (312 aa).

NAD(+)-binding positions include 12–17 (GAGFTG) and D36. Residues R87 and R93 each coordinate substrate. NAD(+)-binding positions include N100 and 123 to 125 (LTN). N125 is a substrate binding site. Position 149 is a phosphoserine (S149). Residue R156 coordinates substrate. The active-site Proton acceptor is H180.

Belongs to the LDH/MDH superfamily. MDH type 3 family.

It catalyses the reaction (S)-malate + NAD(+) = oxaloacetate + NADH + H(+). Functionally, catalyzes the reversible oxidation of malate to oxaloacetate. The chain is Malate dehydrogenase from Geobacillus kaustophilus (strain HTA426).